A 94-amino-acid chain; its full sequence is Exodeoxyribonuclease 7 small subunit (94 aa).

A disordered region spans residues 1-21 (MPRAPNDAPSASATPSATPAS).

Belongs to the XseB family. In terms of assembly, heterooligomer composed of large and small subunits.

It is found in the cytoplasm. The catalysed reaction is Exonucleolytic cleavage in either 5'- to 3'- or 3'- to 5'-direction to yield nucleoside 5'-phosphates.. Bidirectionally degrades single-stranded DNA into large acid-insoluble oligonucleotides, which are then degraded further into small acid-soluble oligonucleotides. The sequence is that of Exodeoxyribonuclease 7 small subunit from Ralstonia pickettii (strain 12J).